The chain runs to 140 residues: ATP synthase epsilon chain (140 aa).

Belongs to the ATPase epsilon chain family. As to quaternary structure, F-type ATPases have 2 components, CF(1) - the catalytic core - and CF(0) - the membrane proton channel. CF(1) has five subunits: alpha(3), beta(3), gamma(1), delta(1), epsilon(1). CF(0) has three main subunits: a, b and c.

It is found in the cell inner membrane. Produces ATP from ADP in the presence of a proton gradient across the membrane. The chain is ATP synthase epsilon chain from Yersinia enterocolitica serotype O:8 / biotype 1B (strain NCTC 13174 / 8081).